A 123-amino-acid chain; its full sequence is Glycine cleavage system H protein (123 aa).

A Lipoyl-binding domain is found at 22 to 104; that stretch reads VATVGITSYA…FGAGWLVKVR (83 aa). Lys-63 is subject to N6-lipoyllysine.

Belongs to the GcvH family. As to quaternary structure, the glycine cleavage system is composed of four proteins: P, T, L and H. (R)-lipoate is required as a cofactor.

The glycine cleavage system catalyzes the degradation of glycine. The H protein shuttles the methylamine group of glycine from the P protein to the T protein. The sequence is that of Glycine cleavage system H protein from Clavibacter sepedonicus (Clavibacter michiganensis subsp. sepedonicus).